Here is a 302-residue protein sequence, read N- to C-terminus: Ventral anterior homeobox 2a (302 aa).

5 disordered regions span residues 1–35 (MFDQATSMGDGVSEERSPLCGKSATSCSERVRDKG), 50–73 (KDIPVTSTSSPGSSKEEVQDSQST), 156–175 (RRTKQKKDQSRDSEKRSSST), 199–223 (PPNLISSSQNNMGTSSGNGTNLGTS), and 282–302 (AFEPYTRLDRKDTASSKKSTS). Positions 105–164 (PKRTRTSFTAEQLYRLELEFQRCQYVVGRERTELARQLNLSETQVKVWFQNRRTKQKKDQ) form a DNA-binding region, homeobox. The span at 161–172 (KKDQSRDSEKRS) shows a compositional bias: basic and acidic residues. Residues 204–223 (SSSQNNMGTSSGNGTNLGTS) are compositionally biased toward low complexity. Residues 287–296 (TRLDRKDTAS) are compositionally biased toward basic and acidic residues.

This sequence belongs to the EMX homeobox family.

It is found in the nucleus. Transcription factor that may function in dorsoventral specification of the forebrain. Regulates the expression of Wnt signaling antagonists including the expression of a truncated tcf7l2 isoform that cannot bind ctnnb1 and acts therefore as a potent dominant-negative Wnt antagonist. Plays a crucial role in eye development and, in particular, in the specification of the ventral optic vesicle. May be a regulator of axial polarization in the retina. The sequence is that of Ventral anterior homeobox 2a (vax2-a) from Xenopus laevis (African clawed frog).